The primary structure comprises 515 residues: 2,3-bisphosphoglycerate-independent phosphoglycerate mutase (515 aa).

Residues D14 and S64 each contribute to the Mn(2+) site. S64 serves as the catalytic Phosphoserine intermediate. Residues H125, 155 to 156, R187, R193, 263 to 266, and K337 contribute to the substrate site; these read RD and RADR. Mn(2+)-binding residues include D404, H408, D445, H446, and H464.

This sequence belongs to the BPG-independent phosphoglycerate mutase family. Monomer. Mn(2+) is required as a cofactor.

The catalysed reaction is (2R)-2-phosphoglycerate = (2R)-3-phosphoglycerate. It functions in the pathway carbohydrate degradation; glycolysis; pyruvate from D-glyceraldehyde 3-phosphate: step 3/5. Functionally, catalyzes the interconversion of 2-phosphoglycerate and 3-phosphoglycerate. This is 2,3-bisphosphoglycerate-independent phosphoglycerate mutase from Yersinia pseudotuberculosis serotype O:1b (strain IP 31758).